We begin with the raw amino-acid sequence, 294 residues long: Ribosomal protein L11 methyltransferase (294 aa).

Residues threonine 145, glycine 167, aspartate 189, and asparagine 230 each coordinate S-adenosyl-L-methionine.

This sequence belongs to the methyltransferase superfamily. PrmA family.

The protein localises to the cytoplasm. It carries out the reaction L-lysyl-[protein] + 3 S-adenosyl-L-methionine = N(6),N(6),N(6)-trimethyl-L-lysyl-[protein] + 3 S-adenosyl-L-homocysteine + 3 H(+). Functionally, methylates ribosomal protein L11. This chain is Ribosomal protein L11 methyltransferase, found in Alkalilimnicola ehrlichii (strain ATCC BAA-1101 / DSM 17681 / MLHE-1).